We begin with the raw amino-acid sequence, 162 residues long: NADH-quinone oxidoreductase subunit I (162 aa).

4Fe-4S ferredoxin-type domains follow at residues 53-83 (LRRY…IESE) and 93-122 (TRYD…EGPN). Residues Cys63, Cys66, Cys69, Cys73, Cys102, Cys105, Cys108, and Cys112 each coordinate [4Fe-4S] cluster.

This sequence belongs to the complex I 23 kDa subunit family. As to quaternary structure, NDH-1 is composed of 14 different subunits. Subunits NuoA, H, J, K, L, M, N constitute the membrane sector of the complex. It depends on [4Fe-4S] cluster as a cofactor.

Its subcellular location is the cell inner membrane. It carries out the reaction a quinone + NADH + 5 H(+)(in) = a quinol + NAD(+) + 4 H(+)(out). In terms of biological role, NDH-1 shuttles electrons from NADH, via FMN and iron-sulfur (Fe-S) centers, to quinones in the respiratory chain. The immediate electron acceptor for the enzyme in this species is believed to be ubiquinone. Couples the redox reaction to proton translocation (for every two electrons transferred, four hydrogen ions are translocated across the cytoplasmic membrane), and thus conserves the redox energy in a proton gradient. This Erythrobacter litoralis (strain HTCC2594) protein is NADH-quinone oxidoreductase subunit I.